Reading from the N-terminus, the 226-residue chain is KFGVEANIGAPQVAYRETIRKAVKAEYKHAKQSGGKGQYGHVVIEMEPMEPGGEGYEFIDEIKGGVIPREFIRLSIKVSAILAYRYRCRLSVVDVRIRLVFGSYHDVDSSQLAFELAASQAFKEGMRQASPALLEPIMAVEVETPEEYMGDVMGDLNRRRGVVLGMDDDGIGGKKVRAEVPLAEMFGYSTDLRSATQGRATYSMEFKKYSEAPAHIAAAVTEARKG.

This sequence belongs to the GTP-binding elongation factor family. EF-G/EF-2 subfamily.

The protein resides in the cytoplasm. In terms of biological role, catalyzes the GTP-dependent ribosomal translocation step during translation elongation. During this step, the ribosome changes from the pre-translocational (PRE) to the post-translocational (POST) state as the newly formed A-site-bound peptidyl-tRNA and P-site-bound deacylated tRNA move to the P and E sites, respectively. Catalyzes the coordinated movement of the two tRNA molecules, the mRNA and conformational changes in the ribosome. This is Elongation factor G (fusA) from Neisseria gonorrhoeae.